The sequence spans 296 residues: tRNA dimethylallyltransferase (296 aa).

Residue 9-16 (GPTAVGKT) coordinates ATP. 11–16 (TAVGKT) is a substrate binding site. An interaction with substrate tRNA region spans residues 34-37 (DSRQ).

This sequence belongs to the IPP transferase family. Monomer. Mg(2+) is required as a cofactor.

It carries out the reaction adenosine(37) in tRNA + dimethylallyl diphosphate = N(6)-dimethylallyladenosine(37) in tRNA + diphosphate. Functionally, catalyzes the transfer of a dimethylallyl group onto the adenine at position 37 in tRNAs that read codons beginning with uridine, leading to the formation of N6-(dimethylallyl)adenosine (i(6)A). The protein is tRNA dimethylallyltransferase of Chloroflexus aggregans (strain MD-66 / DSM 9485).